Here is a 432-residue protein sequence, read N- to C-terminus: Keratin, type I cytoskeletal 17 (432 aa).

Residues 1-24 are disordered; that stretch reads MTTTIRQFTSSSSIKGSSGLGGGS. The head stretch occupies residues 1–83; it reads MTTTIRQFTS…GGVDGLLAGG (83 aa). Residues Ser12 and Ser13 each carry the phosphoserine modification. Residue Lys15 forms a Glycyl lysine isopeptide (Lys-Gly) (interchain with G-Cter in SUMO1); alternate linkage. A Glycyl lysine isopeptide (Lys-Gly) (interchain with G-Cter in SUMO2); alternate cross-link involves residue Lys15. Phosphoserine occurs at positions 25, 32, and 39. Residue Ser44 is modified to Phosphoserine; by RPS6KA1. Residues 84 to 120 form a coil 1A region; that stretch reads EKATMQNLNDRLASYLDKVRALEEANTELEVKIRDWY. In terms of domain architecture, IF rod spans 84-395; the sequence is EKATMQNLND…RLLEGEDAHL (312 aa). Thr110 carries the post-translational modification Phosphothreonine. A linker 1 region spans residues 121-138; the sequence is QRQAPGPARDYSQYYRTI. Residues 139 to 230 form a coil 1B region; that stretch reads EELQNKILTA…NHEEEMNALR (92 aa). Positions 231–250 are linker 12; the sequence is GQVGGEINVEMDAAPGVDLS. Positions 251–392 are coil 2; sequence RILNEMRDQY…TYRRLLEGED (142 aa). A Glycyl lysine isopeptide (Lys-Gly) (interchain with G-Cter in SUMO2) cross-link involves residue Lys278. Position 279 is a phosphothreonine (Thr279). Phosphoserine is present on Ser323. Positions 393–432 are tail; it reads AHLTQYKKEPVTTRQVRTIVEEVQDGKVISSREQVHQTTR. Residues Lys399, Lys400, and Lys419 each participate in a glycyl lysine isopeptide (Lys-Gly) (interchain with G-Cter in SUMO1); alternate cross-link. Glycyl lysine isopeptide (Lys-Gly) (interchain with G-Cter in SUMO2); alternate cross-links involve residues Lys399, Lys400, and Lys419.

Belongs to the intermediate filament family. In terms of assembly, heterodimer of a type I and a type II keratin. KRT17 associates with KRT6 isomers (KRT6A or KRT6B). Interacts with TRADD and SFN. In terms of processing, phosphorylation at Ser-44 occurs in a growth- and stress-dependent fashion in skin keratinocytes, it has no effect on filament organization.

The protein resides in the cytoplasm. In terms of biological role, type I keratin involved in the formation and maintenance of various skin appendages, specifically in determining shape and orientation of hair. Required for the correct growth of hair follicles, in particular for the persistence of the anagen (growth) state. Modulates the function of TNF-alpha in the specific context of hair cycling. Regulates protein synthesis and epithelial cell growth through binding to the adapter protein SFN and by stimulating Akt/mTOR pathway. Involved in tissue repair. May be a marker of basal cell differentiation in complex epithelia and therefore indicative of a certain type of epithelial 'stem cells'. Acts as a promoter of epithelial proliferation by acting a regulator of immune response in skin: promotes Th1/Th17-dominated immune environment contributing to the development of basaloid skin tumors. May act as an autoantigen in the immunopathogenesis of psoriasis, with certain peptide regions being a major target for autoreactive T-cells and hence causing their proliferation. The chain is Keratin, type I cytoskeletal 17 from Pan troglodytes (Chimpanzee).